The following is a 905-amino-acid chain: Methionine--tRNA ligase, cytoplasmic (905 aa).

Residues M1–M75 form the GST N-terminal domain. Residues G72–F199 form the GST C-terminal domain. Residues P271–N281 carry the 'HIGH' region motif. A 'KMSKS' region motif is present at residues K591–S595. K594 contributes to the ATP binding site. 2 disordered regions span residues R813–P874 and L886–K905. Positions G841 to P874 are enriched in basic and acidic residues. In terms of domain architecture, WHEP-TRS spans R844–K900.

This sequence belongs to the class-I aminoacyl-tRNA synthetase family. Monomer. Part of a multisubunit complex that groups tRNA ligases for Arg (RARS1), Asp (DARS1), Gln (QARS1), Ile (IARS1), Leu (LARS1), Lys (KARS1), Met (MARS1) the bifunctional ligase for Glu and Pro (EPRS1) and the auxiliary subunits AIMP1/p43, AIMP2/p38 and EEF1E1/p18.

The protein resides in the cytoplasm. It is found in the cytosol. The protein localises to the nucleus. Its subcellular location is the nucleolus. The catalysed reaction is tRNA(Met) + L-methionine + ATP = L-methionyl-tRNA(Met) + AMP + diphosphate. Its function is as follows. Catalyzes the specific attachment of an amino acid to its cognate tRNA in a 2 step reaction: the amino acid (AA) is first activated by ATP to form AA-AMP and then transferred to the acceptor end of the tRNA. Plays a role in the synthesis of ribosomal RNA in the nucleolus. The sequence is that of Methionine--tRNA ligase, cytoplasmic (mars1) from Xenopus laevis (African clawed frog).